The primary structure comprises 97 residues: MAPLPPCGPPRSPPPRLLLLLLLLSATLLGAPARAEPAAGSAVPAQSRPCVDCHAFEFMQRALQDLRKTAYSLDARTESLLLQAERRALCACWPAGH.

Residues M1 to A35 form the signal peptide.

This sequence belongs to the NICOL family. As to quaternary structure, interacts with NELL2; triggers epididymal differentiation. Interacts with cell surface receptor TFRC; the interaction mediates uptake of NICOL1 into fibroblasts.

Its subcellular location is the secreted. It localises to the cytoplasm. The protein resides in the perinuclear region. MRNA-binding protein which interacts with a range of target mRNAs including SERPINE1, ACTA2, CCN2 and COL4A1 and may promote extracellular matrix production. Binds to the 3'-UTR of SERPINE1 mRNA and stabilizes the mRNA, possibly by competing for binding with SERBP1 and preventing SERBP1-mediated mRNA degradation. Also binds to the 3'-UTR of ACTA2. Testis-derived lumicrine factor that triggers epididymal differentiation and sperm maturation. In Bos taurus (Bovine), this protein is NELL2-interacting cell ontogeny regulator 1.